Here is a 210-residue protein sequence, read N- to C-terminus: Probable GTP-binding protein EngB (210 aa).

In terms of domain architecture, EngB-type G spans 25–199 (TGIEVAFAGR…RQKLDTWFSE (175 aa)). Residues 33-40 (GRSNAGKS), 60-64 (GRTQL), 78-81 (DLPG), 145-148 (TKAD), and 178-180 (FSS) each bind GTP. Positions 40 and 62 each coordinate Mg(2+).

Belongs to the TRAFAC class TrmE-Era-EngA-EngB-Septin-like GTPase superfamily. EngB GTPase family. It depends on Mg(2+) as a cofactor.

In terms of biological role, necessary for normal cell division and for the maintenance of normal septation. The chain is Probable GTP-binding protein EngB from Shigella flexneri.